Reading from the N-terminus, the 486-residue chain is Outer dynein arm-docking complex subunit 4 (486 aa).

TPR repeat units lie at residues 14–47, 49–81, and 82–115; these read FTTY…QPDD, NCLV…NKNY, and FKGL…RPEL. Residues 153 to 180 form a disordered region; sequence GVHPQNLNPSNKKESKKHSKKTDKGEKT. TPR repeat units lie at residues 314-347, 354-387, 391-424, and 431-464; these read GNLH…AKKC, SRAL…ACGG, AWLF…ADDI, and LNAS…AKLL.

In terms of assembly, component of the outer dynein arm-docking complex along with ODAD1, ODAD2 and ODAD3.

The protein resides in the cytoplasm. It localises to the cytoskeleton. The protein localises to the cilium axoneme. In terms of biological role, component of the outer dynein arm-docking complex (ODA-DC) that mediates outer dynein arms (ODA) binding onto the doublet microtubule. Plays an essential role for the assembly of ODA-DC and in the docking of ODA in ciliary axoneme. The polypeptide is Outer dynein arm-docking complex subunit 4 (odad4) (Danio rerio (Zebrafish)).